Here is a 109-residue protein sequence, read N- to C-terminus: MTVLSEKKCIPCEGGVPPLEKKEIDKLLAELQNEWQVNELGHLYKKYKFPNFVKALDFANKIAAIAEQEVHHPNLNISWGVCNVEIWTHKINGLTENDFILAAKIESKI.

This sequence belongs to the pterin-4-alpha-carbinolamine dehydratase family.

The enzyme catalyses (4aS,6R)-4a-hydroxy-L-erythro-5,6,7,8-tetrahydrobiopterin = (6R)-L-erythro-6,7-dihydrobiopterin + H2O. The chain is Putative pterin-4-alpha-carbinolamine dehydratase from Rickettsia canadensis (strain McKiel).